The following is a 185-amino-acid chain: Ribosome-recycling factor (185 aa).

Belongs to the RRF family.

Its subcellular location is the cytoplasm. In terms of biological role, responsible for the release of ribosomes from messenger RNA at the termination of protein biosynthesis. May increase the efficiency of translation by recycling ribosomes from one round of translation to another. This chain is Ribosome-recycling factor, found in Streptococcus pyogenes serotype M28 (strain MGAS6180).